A 275-amino-acid polypeptide reads, in one-letter code: Polyamine aminopropyltransferase (275 aa).

The 234-residue stretch at 2–235 (DLWLREGQIE…GFWSFTIGSK (234 aa)) folds into the PABS domain. Gln31 serves as a coordination point for S-methyl-5'-thioadenosine. His62 and Asp86 together coordinate spermidine. Residues Glu106 and 137 to 138 (DG) contribute to the S-methyl-5'-thioadenosine site. Asp155 (proton acceptor) is an active-site residue. 155–158 (DSTD) is a spermidine binding site.

This sequence belongs to the spermidine/spermine synthase family. Homodimer or homotetramer.

Its subcellular location is the cytoplasm. The catalysed reaction is S-adenosyl 3-(methylsulfanyl)propylamine + putrescine = S-methyl-5'-thioadenosine + spermidine + H(+). Its pathway is amine and polyamine biosynthesis; spermidine biosynthesis; spermidine from putrescine: step 1/1. Its function is as follows. Catalyzes the irreversible transfer of a propylamine group from the amino donor S-adenosylmethioninamine (decarboxy-AdoMet) to putrescine (1,4-diaminobutane) to yield spermidine. The chain is Polyamine aminopropyltransferase from Clostridium kluyveri (strain NBRC 12016).